A 184-amino-acid polypeptide reads, in one-letter code: Cathelicidin-related peptide Pt_CRAMP2 (184 aa).

A signal peptide spans 1 to 22 (MDGFFWKTWLVVAALAIGGTSS). Residues 23 to 150 (LPHKPLTYEE…EDEKDQPRRV (128 aa)) constitute a propeptide that is removed on maturation. Cystine bridges form between Cys81-Cys92 and Cys103-Cys120. Positions 125–144 (EDEEQNQEEEEEEEKEEDEK) are enriched in acidic residues. A disordered region spans residues 125–147 (EDEEQNQEEEEEEEKEEDEKDQP).

The protein belongs to the cathelicidin family. Expressed by the venom gland.

It localises to the secreted. The protein resides in the target cell membrane. Its function is as follows. Potent antimicrobial peptide against most of Gram-negative bacteria, some Gram-positive bacteria (Bacillus) and some fungi (C.albicans, P.pastoris, A.terreus, A.nidulans, and C.globosum). Adopts an amphipathic alpha helical conformation, that may allow to partition into the target membrane. No hemolytic and cytotoxic activities have been observed on mammalian cells. The polypeptide is Cathelicidin-related peptide Pt_CRAMP2 (Pseudonaja textilis (Eastern brown snake)).